A 506-amino-acid polypeptide reads, in one-letter code: 26S proteasome non-ATPase regulatory subunit 5 (506 aa).

Belongs to the proteasome subunit S5B/HSM3 family. As to quaternary structure, interacts with PI31; this interaction is increased by PI31 ADP-ribosylation. Interacts with Rpt2.

Its function is as follows. Acts as a chaperone during the assembly of the 26S proteasome. This Drosophila melanogaster (Fruit fly) protein is 26S proteasome non-ATPase regulatory subunit 5.